Reading from the N-terminus, the 501-residue chain is Mitochondrial inner membrane i-AAA protease supercomplex subunit MGR3 (501 aa).

At Met-1–Arg-77 the chain is on the mitochondrial matrix side. The segment at Arg-39–Leu-72 is disordered. A helical membrane pass occupies residues Ser-78–Phe-95. The Mitochondrial intermembrane segment spans residues Lys-96–Asn-501. 4 TPR repeats span residues Gln-109–Ser-144, Thr-154–Ala-187, Gly-386–Asn-420, and Ala-440–Thr-473.

The protein belongs to the MGR3 family. Component of the mitochondrial inner membrane i-AAA protease supercomplex composed of MGR1, MGR3 and YME1. With MGR1, forms a subcomplex that binds to YME1 and to substrates to facilitate proteolysis.

The protein resides in the mitochondrion inner membrane. Component of the mitochondrial inner membrane i-AAA protease supercomplex, which degrades misfolded mitochondrial proteins. Together with MGR1, functions in an adapter complex that targets substrates to the i-AAA protease for degradation. Required for growth of cells lacking the mitochondrial genome. This is Mitochondrial inner membrane i-AAA protease supercomplex subunit MGR3 (MGR3) from Saccharomyces cerevisiae (strain ATCC 204508 / S288c) (Baker's yeast).